Here is an 88-residue protein sequence, read N- to C-terminus: MMSKMGAMFVLLLLFTLASSLQEGDVQARKTRLKSDFYRALARDDRGCTRTCGGPKCTGTCTCTNSSKCGCRYNVHPSGWGCGCACSG.

A signal peptide spans methionine 1–serine 20. A propeptide spanning residues leucine 21–arginine 46 is cleaved from the precursor. Position 55 is a 4-hydroxyproline (proline 55). Tryptophan 80 is modified (6'-bromotryptophan). Serine 87 bears the Serine amide mark.

It belongs to the conotoxin S superfamily. In terms of processing, contains 5 disulfide bonds. In terms of tissue distribution, expressed by the venom duct.

It is found in the secreted. Its function is as follows. Sigma-conotoxins bind and inhibit serotonin-gated ion channels. This peptide selectively and reversibly inhibits 5-hydroxytryptamine 3 receptor (HTR3A) through competitive antagonism (IC(50)=53-86.8 nM). This chain is Sigma-conotoxin GVIIIA, found in Conus geographus (Geography cone).